Here is a 520-residue protein sequence, read N- to C-terminus: Cilia- and flagella-associated protein 157 (520 aa).

The disordered stretch occupies residues 1–22 (MAPKKSVSKAGKELEVKKKGGK). Residues 10 to 22 (AGKELEVKKKGGK) show a composition bias toward basic and acidic residues. Coiled coils occupy residues 33–189 (LAKE…LEKK) and 236–372 (LQMA…QATS). Residues 416 to 453 (PQKAACPHQESQSHGPPKESRPSIQLPRTGSLLPQLSD) are disordered. Polar residues predominate over residues 437–453 (PSIQLPRTGSLLPQLSD).

The protein belongs to the CFAP157 family. In terms of assembly, interacts with TUBB and TUBA4A. Interacts with CEP350.

It localises to the cytoplasm. The protein localises to the cytoskeleton. Its subcellular location is the cilium basal body. In terms of biological role, specifically required during spermatogenesis for flagellum morphogenesis and sperm motility. May be required to suppress the formation of supernumerary axonemes and ensure a correct ultrastructure. The chain is Cilia- and flagella-associated protein 157 from Homo sapiens (Human).